The following is a 276-amino-acid chain: Carbonic anhydrase Nec1 (276 aa).

The signal sequence occupies residues 1–27; sequence MKMINSIFTHGSLIILLLLFHSISIKA. One can recognise an Alpha-carbonic anhydrase domain in the interval 34–270; the sequence is REFDYLEGSE…LNHREVQLHC (237 aa). A disulfide bridge connects residues C59 and C220. H98 (proton acceptor) is an active-site residue. Residues H124 and H126 each contribute to the Zn(2+) site. N134 carries N-linked (GlcNAc...) asparagine glycosylation. Zn(2+) is bound at residue H143. A substrate binding region spans residues 216-217; sequence TT.

The protein belongs to the alpha-class carbonic anhydrase family. As to quaternary structure, homodimer. It depends on Zn(2+) as a cofactor. As to expression, confined to nectaries.

It catalyses the reaction hydrogencarbonate + H(+) = CO2 + H2O. It participates in one-carbon metabolism. In terms of biological role, involved in the production of blood-red nectar containing the alkaloid nesocodin and that serves as a visual attractant for pollinator visitation, including vertebrates such as Phelsuma geckos. The nectar is initially acidic and pale yellow, but slowly becomes alkaline before turning into red within 24 hours. Together with NEC2 and NEC3, facilitates the condensation of sinapaldehyde ((E)-3,5-dimethoxy-4-hydroxycinnamaldehyde) and proline to form nesocodin, a pigment with a stable imine bond. Mediates the alkalinization (pH increase) of the flower nectar by catalyzing the reversible hydration of carbon dioxide. This is Carbonic anhydrase Nec1 from Nesocodon mauritianus (Blue Mauritius bellflower).